Consider the following 399-residue polypeptide: Probable dual-specificity RNA methyltransferase RlmN (399 aa).

Glu97 acts as the Proton acceptor in catalysis. In terms of domain architecture, Radical SAM core spans 103-381 (YPDRATVCVS…CTVRVERGVS (279 aa)). Cys110 and Cys386 are oxidised to a cystine. [4Fe-4S] cluster-binding residues include Cys117, Cys121, and Cys124. S-adenosyl-L-methionine is bound by residues 203-204 (GE), Ser235, 258-260 (SLH), and Asn343. Residue Cys386 is the S-methylcysteine intermediate of the active site.

Belongs to the radical SAM superfamily. RlmN family. Requires [4Fe-4S] cluster as cofactor.

It is found in the cytoplasm. The enzyme catalyses adenosine(2503) in 23S rRNA + 2 reduced [2Fe-2S]-[ferredoxin] + 2 S-adenosyl-L-methionine = 2-methyladenosine(2503) in 23S rRNA + 5'-deoxyadenosine + L-methionine + 2 oxidized [2Fe-2S]-[ferredoxin] + S-adenosyl-L-homocysteine. The catalysed reaction is adenosine(37) in tRNA + 2 reduced [2Fe-2S]-[ferredoxin] + 2 S-adenosyl-L-methionine = 2-methyladenosine(37) in tRNA + 5'-deoxyadenosine + L-methionine + 2 oxidized [2Fe-2S]-[ferredoxin] + S-adenosyl-L-homocysteine. Its function is as follows. Specifically methylates position 2 of adenine 2503 in 23S rRNA and position 2 of adenine 37 in tRNAs. In Roseiflexus sp. (strain RS-1), this protein is Probable dual-specificity RNA methyltransferase RlmN.